Consider the following 127-residue polypeptide: Large ribosomal subunit protein uL24B (127 aa).

This sequence belongs to the universal ribosomal protein uL24 family. In terms of assembly, component of the large ribosomal subunit (LSU). Mature yeast ribosomes consist of a small (40S) and a large (60S) subunit. The 40S small subunit contains 1 molecule of ribosomal RNA (18S rRNA) and 33 different proteins (encoded by 57 genes). The large 60S subunit contains 3 rRNA molecules (25S, 5.8S and 5S rRNA) and 46 different proteins (encoded by 81 genes).

It is found in the cytoplasm. Its function is as follows. Component of the ribosome, a large ribonucleoprotein complex responsible for the synthesis of proteins in the cell. The small ribosomal subunit (SSU) binds messenger RNAs (mRNAs) and translates the encoded message by selecting cognate aminoacyl-transfer RNA (tRNA) molecules. The large subunit (LSU) contains the ribosomal catalytic site termed the peptidyl transferase center (PTC), which catalyzes the formation of peptide bonds, thereby polymerizing the amino acids delivered by tRNAs into a polypeptide chain. The nascent polypeptides leave the ribosome through a tunnel in the LSU and interact with protein factors that function in enzymatic processing, targeting, and the membrane insertion of nascent chains at the exit of the ribosomal tunnel. In Saccharomyces cerevisiae (strain ATCC 204508 / S288c) (Baker's yeast), this protein is Large ribosomal subunit protein uL24B.